Here is an 88-residue protein sequence, read N- to C-terminus: UPF0297 protein BT9727_4120 (88 aa).

This sequence belongs to the UPF0297 family.

The protein is UPF0297 protein BT9727_4120 of Bacillus thuringiensis subsp. konkukian (strain 97-27).